A 614-amino-acid polypeptide reads, in one-letter code: MNREVVTMSTGNTLPPALAALASPLNDAQLNQLQQTVTQLNAQQLAWVSGYFWGLSQSNALSVPHISAGQTASAASGKLTIIFASQTGNAKGVAQALLKEAQAAGIQAQLFDASDYKGKDLAKETHVIFVASTNGEGEAPDNALALHEFLKSKKAPKLPNLKYGVLGLGDSSYQFFCQTGKDFDQFLENLGAQRLVERLDADVDYQAAATEWRKQVLSILKDELTGAAAVTSVATFAVSQTAESHYSKEQPYTASLSTSQKITGRDSGKDVRHIEIDLADSGITYQPGDALGVWYENRPQLVNALLDSVGLSGHEEVQVDGETLSLHSALTHHYEITAANPQLVAQFAELAQSEKLTSLAQDKEALREYATRTQVIDVLREEKVTLSAIQLLSLLRRLTPRLYSIASSQSEVGEEVHLTVGVVEYEYEGEQRLGGASSFLAHQLEEGAPVKVFVEHNNNFKLPSDDNAPLIMVGPGTGIAPFRSFIQERENRGAAGKNWLLFGDRTFTQDFLYQVEWQKYLKSGVLNRLDVAFSRDQHEKVYVQHRLLEQAELVWQWLQEGAYFYVCGDASRMAKDVHQALITVVEQQGGLNREQAEEYVSELRKAKRYQRDVY.

Positions 79-217 (LTIIFASQTG…AATEWRKQVL (139 aa)) constitute a Flavodoxin-like domain. FMN is bound by residues 85–90 (SQTGNA), 132–135 (STNG), and 168–177 (LGDSSYQFFC). Residues 249-463 (EQPYTASLST…VEHNNNFKLP (215 aa)) enclose the FAD-binding FR-type domain. Residues Thr-337, Thr-371, 401–404 (RLYS), 419–421 (TVG), Tyr-425, and 434–437 (GGAS) each bind FAD. NADP(+) contacts are provided by residues 534–535 (SR), 540–544 (KVYVQ), and Asp-576. Tyr-614 contacts FAD.

This sequence belongs to the NADPH-dependent sulphite reductase flavoprotein subunit CysJ family. In the N-terminal section; belongs to the flavodoxin family. It in the C-terminal section; belongs to the flavoprotein pyridine nucleotide cytochrome reductase family. In terms of assembly, alpha(8)-beta(8). The alpha component is a flavoprotein, the beta component is a hemoprotein. Requires FAD as cofactor. FMN is required as a cofactor.

It carries out the reaction hydrogen sulfide + 3 NADP(+) + 3 H2O = sulfite + 3 NADPH + 4 H(+). The protein operates within sulfur metabolism; hydrogen sulfide biosynthesis; hydrogen sulfide from sulfite (NADPH route): step 1/1. Component of the sulfite reductase complex that catalyzes the 6-electron reduction of sulfite to sulfide. This is one of several activities required for the biosynthesis of L-cysteine from sulfate. The flavoprotein component catalyzes the electron flow from NADPH -&gt; FAD -&gt; FMN to the hemoprotein component. This Vibrio cholerae serotype O1 (strain ATCC 39315 / El Tor Inaba N16961) protein is Sulfite reductase [NADPH] flavoprotein alpha-component.